The chain runs to 151 residues: Probable ribonuclease P/MRP protein subunit POP5 (151 aa).

The protein belongs to the eukaryotic/archaeal RNase P protein component 2 family. As to quaternary structure, component of nuclear RNase P and RNase MRP ribonucleoproteins. Interacts with GAF1/RPP30.

It localises to the nucleus. Its subcellular location is the nucleolus. Essential protein required during embryogenesis. Component of ribonuclease P, a protein complex that generates mature tRNA molecules by cleaving their 5'-ends. Also a component of RNase MRP. The polypeptide is Probable ribonuclease P/MRP protein subunit POP5 (EMB1687) (Arabidopsis thaliana (Mouse-ear cress)).